Here is a 161-residue protein sequence, read N- to C-terminus: Small ribosomal subunit protein uS9 (161 aa).

Disordered regions lie at residues 1–28 (MAQI…PKAP) and 142–161 (KERK…FSKR).

The protein belongs to the universal ribosomal protein uS9 family.

The polypeptide is Small ribosomal subunit protein uS9 (Clavibacter sepedonicus (Clavibacter michiganensis subsp. sepedonicus)).